A 275-amino-acid polypeptide reads, in one-letter code: Large ribosomal subunit protein uL2c (275 aa).

The tract at residues 225 to 275 is disordered; the sequence is MNPCDHPHGGGEGRSPIGRPRPVSPWGKPALGQRTRKGHKYSDQMILRRRK.

Belongs to the universal ribosomal protein uL2 family. Part of the 50S ribosomal subunit.

It is found in the plastid. The protein localises to the chloroplast. This Oltmannsiellopsis viridis (Marine flagellate) protein is Large ribosomal subunit protein uL2c (rpl2).